The following is a 523-amino-acid chain: Galactarate dehydratase (L-threo-forming) (523 aa).

The protein belongs to the UxaA family. Homodimer. It depends on Fe(2+) as a cofactor.

It carries out the reaction galactarate = 5-dehydro-4-deoxy-D-glucarate + H2O. Its pathway is carbohydrate acid metabolism; galactarate degradation; D-glycerate from galactarate: step 1/3. Catalyzes the dehydration of galactarate to form 5-dehydro-4-deoxy-D-glucarate (5-KDG). In Escherichia coli (strain K12), this protein is Galactarate dehydratase (L-threo-forming).